Consider the following 209-residue polypeptide: Superoxide dismutase [Mn/Fe] (209 aa).

His38, His90, Asp172, and His176 together coordinate Fe(3+). Mn(2+) is bound by residues His38, His90, Asp172, and His176.

The protein belongs to the iron/manganese superoxide dismutase family. Mn(2+) is required as a cofactor. The cofactor is Fe(3+).

It carries out the reaction 2 superoxide + 2 H(+) = H2O2 + O2. Its function is as follows. Destroys superoxide anion radicals which are normally produced within the cells and which are toxic to biological systems. Catalyzes the dismutation of superoxide anion radicals into O2 and H2O2 by successive reduction and oxidation of the transition metal ion at the active site. The polypeptide is Superoxide dismutase [Mn/Fe] (sodB) (Rickettsia prowazekii (strain Madrid E)).